The sequence spans 470 residues: Putative multidrug resistance protein MdtD (470 aa).

Topologically, residues 1–11 are periplasmic; it reads MTELPDNTRWQ. The chain crosses the membrane as a helical span at residues 12 to 32; the sequence is LWIVAFGFFMQSLDTTIVNTA. At 33–48 the chain is on the cytoplasmic side; the sequence is LPSMAKSLGESPLHMH. A helical membrane pass occupies residues 49 to 69; that stretch reads MVVVSYVLTVAVMLPASGWLA. Over 70 to 76 the chain is Periplasmic; it reads DKIGVRN. A helical transmembrane segment spans residues 77–97; sequence IFFAAIVLFTLGSLFCALSGT. Over 98–101 the chain is Cytoplasmic; sequence LNQL. The chain crosses the membrane as a helical span at residues 102–124; the sequence is VLARVLQGVGGAMMVPVGRLTVM. Topologically, residues 125–137 are periplasmic; that stretch reads KIVPRAQYMAAMT. Residues 138–158 traverse the membrane as a helical segment; sequence FVTLPGQIGPLLGPALGGVLV. Over 159–164 the chain is Cytoplasmic; the sequence is EYASWH. The chain crosses the membrane as a helical span at residues 165-185; sequence WIFLINIPVGIVGAMATFMLM. The Periplasmic segment spans residues 186–196; it reads PNYIIETRRFD. A helical membrane pass occupies residues 197 to 217; sequence LPGFLLLAIGMAVLTLALDGS. Residues 218-224 lie on the Cytoplasmic side of the membrane; that stretch reads KSMGISP. Residues 225 to 245 form a helical membrane-spanning segment; sequence WTLAGLAAGGAAAILLYLFHA. The Periplasmic portion of the chain corresponds to 246 to 262; the sequence is KKNSGALFSLRLFRTPT. The helical transmembrane segment at 263-283 threads the bilayer; sequence FSLGLLGSFAGRIGSGMLPFM. Topologically, residues 284-285 are cytoplasmic; it reads TP. The helical transmembrane segment at 286 to 306 threads the bilayer; that stretch reads VFLQIGLGFSPFHAGLMMIPM. Residues 307–341 are Periplasmic-facing; the sequence is VLGSMGMKRIVVQIVNRFGYRRVLVATTLGLALVS. A helical membrane pass occupies residues 342-362; sequence LLFMSVALLGWYYLLPLVLLL. The Cytoplasmic segment spans residues 363–395; it reads QGMVNSARFSSMNTLTLKDLPDTLASSGNSLLS. A helical transmembrane segment spans residues 396–416; sequence MIMQLSMSIGVTIAGMLLGMF. Residues 417–430 are Periplasmic-facing; sequence GQQHIGIDSSATHH. Residues 431-451 traverse the membrane as a helical segment; that stretch reads VFMYTWLCMAVIIALPAIIFA. Over 452-470 the chain is Cytoplasmic; that stretch reads RVPNDTQQNMVISRRKRSL.

It belongs to the major facilitator superfamily. TCR/Tet family.

It is found in the cell inner membrane. The chain is Putative multidrug resistance protein MdtD from Salmonella typhimurium (strain LT2 / SGSC1412 / ATCC 700720).